Here is a 495-residue protein sequence, read N- to C-terminus: UDP-glycosyltransferase 73C6 (495 aa).

UDP-alpha-D-glucose contacts are provided by residues Ser296, 356 to 358 (SPQ), 373 to 381 (HCGWNSTLE), and 395 to 398 (FADQ). Residues 449–475 (SDDAKERRRRAKELGESAHKAVEEGGS) are disordered. The segment covering 450–471 (DDAKERRRRAKELGESAHKAVE) has biased composition (basic and acidic residues).

Belongs to the UDP-glycosyltransferase family. Expressed in leaves and flowers, and at a very low level in roots.

Functionally, acts as a UDP-glucose:flavonol-3-O-glycoside-7-O-glucosyltransferase. 6- and 7-hydroxyflavone, but not 3- or 5-hydroxyflavone are accepted as substrates. Possesses low quercetin 3-O-glucosyltransferase, 7-O-glucosyltransferase and 4'-O-glucosyltransferase activities in vitro. The sequence is that of UDP-glycosyltransferase 73C6 (UGT73C6) from Arabidopsis thaliana (Mouse-ear cress).